The chain runs to 422 residues: UDP-N-acetylglucosamine 1-carboxyvinyltransferase (422 aa).

22–23 (KN) contributes to the phosphoenolpyruvate binding site. R93 provides a ligand contact to UDP-N-acetyl-alpha-D-glucosamine. The Proton donor role is filled by C117. Position 117 is a 2-(S-cysteinyl)pyruvic acid O-phosphothioketal (C117). Residues 122-126 (RPVDL), D308, and L330 contribute to the UDP-N-acetyl-alpha-D-glucosamine site.

The protein belongs to the EPSP synthase family. MurA subfamily.

It is found in the cytoplasm. The enzyme catalyses phosphoenolpyruvate + UDP-N-acetyl-alpha-D-glucosamine = UDP-N-acetyl-3-O-(1-carboxyvinyl)-alpha-D-glucosamine + phosphate. It participates in cell wall biogenesis; peptidoglycan biosynthesis. Functionally, cell wall formation. Adds enolpyruvyl to UDP-N-acetylglucosamine. This chain is UDP-N-acetylglucosamine 1-carboxyvinyltransferase, found in Helicobacter pylori (strain ATCC 700392 / 26695) (Campylobacter pylori).